The following is a 127-amino-acid chain: UPF0102 protein Mmwyl1_2395 (127 aa).

This sequence belongs to the UPF0102 family.

This Marinomonas sp. (strain MWYL1) protein is UPF0102 protein Mmwyl1_2395.